Consider the following 165-residue polypeptide: Shikimate kinase (165 aa).

G12–T17 is a binding site for ATP. A Mg(2+)-binding site is contributed by S16. Residues D34, R57, and G79 each contribute to the substrate site. ATP is bound at residue R116. R133 is a binding site for substrate.

Belongs to the shikimate kinase family. As to quaternary structure, monomer. Requires Mg(2+) as cofactor.

The protein resides in the cytoplasm. It catalyses the reaction shikimate + ATP = 3-phosphoshikimate + ADP + H(+). Its pathway is metabolic intermediate biosynthesis; chorismate biosynthesis; chorismate from D-erythrose 4-phosphate and phosphoenolpyruvate: step 5/7. In terms of biological role, catalyzes the specific phosphorylation of the 3-hydroxyl group of shikimic acid using ATP as a cosubstrate. In Clostridium botulinum (strain Eklund 17B / Type B), this protein is Shikimate kinase.